Reading from the N-terminus, the 466-residue chain is Zinc finger protein NUTCRACKER (466 aa).

Positions 1–23 are enriched in polar residues; that stretch reads MTSEVLQTISSGSGFAQPQSSST. The interval 1–29 is disordered; the sequence is MTSEVLQTISSGSGFAQPQSSSTLDHDES. S56 is subject to Phosphoserine. The C2H2-type 1 zinc finger occupies 66–88; it reads FLCEVCGKGFQRDQNLQLHRRGH. T98 carries the post-translational modification Phosphothreonine; by KIN10. Residues 107 to 137 form a C2H2-type 2 zinc finger; that stretch reads YVCPEKTCVHHHSSRALGDLTGIKKHFCRKH. The short motif at 134 to 141 is the Nuclear localization signal element; the sequence is CRKHGEKK. Residues 142-165 form a C2H2-type 2; degenerate zinc finger; that stretch reads WTCEKCAKRYAVQSDWKAHSKTCG. Positions 144, 147, 160, 164, 171, and 173 each coordinate Zn(2+). Residues 169–192 form a CCHC-type 2; atypical zinc finger; the sequence is YRCDCGTIFSRRDSFITHRAFCDA. A phosphoserine; by KIN10 mark is found at S178 and S182. Residues 179–191 are SHR-binding; the sequence is RRDSFITHRAFCD. 2 residues coordinate Zn(2+): H186 and C190.

As to quaternary structure, interacts with AKIN10. In terms of processing, inhibition of transcription factor activity by KIN10-mediated phosphorylation at Thr-98, Ser-178 and Ser-182 under sugar deprivation conditions, thus delaying flowering. Highly expressed in vegetative organs and at lower levels in flowers and siliques. Expressed predominantly in roots. In roots, present in cortex, endodermis, and pericycle layer.

The protein localises to the nucleus. Transcription activator that binds to the DNA sequence 5'-CTTTTGTCC-3'. Regulates photoperiodic flowering by modulating sugar transport and metabolism. Regulates SUS1 and SUS4. Transcription factor that regulates tissue boundaries and asymmetric cell division. Contributes to the sequestration of 'SHORT-ROOT' to the nucleus. The chain is Zinc finger protein NUTCRACKER from Arabidopsis thaliana (Mouse-ear cress).